The sequence spans 823 residues: Leucine--tRNA ligase (823 aa).

The short motif at 42 to 52 is the 'HIGH' region element; it reads PYPSGTLHMGH. The short motif at 575–579 is the 'KMSKS' region element; sequence KMSKS. ATP is bound at residue Lys-578.

It belongs to the class-I aminoacyl-tRNA synthetase family.

The protein resides in the cytoplasm. It carries out the reaction tRNA(Leu) + L-leucine + ATP = L-leucyl-tRNA(Leu) + AMP + diphosphate. The polypeptide is Leucine--tRNA ligase (Legionella pneumophila (strain Paris)).